Consider the following 566-residue polypeptide: Osteoclast stimulatory transmembrane protein (566 aa).

At Met1–Gln51 the chain is on the cytoplasmic side. A helical membrane pass occupies residues Leu52–Ser72. Topologically, residues Leu73–Ser81 are extracellular. The helical transmembrane segment at Ala82 to Val102 threads the bilayer. Topologically, residues Arg103–Ala128 are cytoplasmic. Residues Thr129–Leu149 form a helical membrane-spanning segment. Residues Arg150–Arg227 are Extracellular-facing. Residues Val228–Tyr248 traverse the membrane as a helical segment. The Cytoplasmic portion of the chain corresponds to Leu249–Gly304. Residues Leu305–Leu325 traverse the membrane as a helical segment. Over Leu326 to Arg398 the chain is Extracellular. A helical transmembrane segment spans residues Ala399–Glu419. The Cytoplasmic portion of the chain corresponds to Ala420–Gly566.

The protein localises to the membrane. Its function is as follows. Probable cell surface receptor that plays a role in cellular fusion and cell differentiation. Cooperates with DCSTAMP in modulating cell-cell fusion in both osteoclasts and foreign body giant cells (FBGCs). Involved in osteoclast bone resorption. Promotes osteoclast differentiation and may play a role in the multinucleated osteoclast maturation. This Homo sapiens (Human) protein is Osteoclast stimulatory transmembrane protein (OCSTAMP).